A 56-amino-acid chain; its full sequence is Large ribosomal subunit protein bL32 (56 aa).

Residues 1–19 (MAVPKRKKSRSTTRHRRAQ) show a composition bias toward basic residues. The disordered stretch occupies residues 1–22 (MAVPKRKKSRSTTRHRRAQWKT).

The protein belongs to the bacterial ribosomal protein bL32 family.

The polypeptide is Large ribosomal subunit protein bL32 (Cutibacterium acnes (strain DSM 16379 / KPA171202) (Propionibacterium acnes)).